A 197-amino-acid chain; its full sequence is Phospholipid hydroperoxide glutathione peroxidase GPX4 (197 aa).

Serine 40 bears the Phosphoserine mark. The active site involves selenocysteine 73. Position 73 (selenocysteine 73) is a non-standard amino acid, selenocysteine.

It belongs to the glutathione peroxidase family. As to quaternary structure, monomer. Has a tendency to form higher mass oligomers. Interacts with FUNDC1; this interaction promotes GPX4 recruitment into mitochondria through TOM/TIM complex where it is degraded by mitophagy. Widely expressed with the highest levels in testis, heart, cerebrum, ileum, stomach, liver, jejunum and epididymis. Expressed primarily in testis and sperm midpiece (at protein level). Expressed in brain (at protein level). Expressed in heart, liver and kidney (at protein level). Expressed in retina, especially in inner segments of photoreceptor cells (at protein level). As to expression, highly expressed during embryogenesis. Down-regulated between 14.5 dpc and 17.5 dpc. In terms of tissue distribution, highly expressed during embryogenesis. In contrast to isoform Mitochondrial and isoform Nuclear, which are down-regulated between 14.5 dpc and 17.5 dpc, remains constant. Mainly expressed in sperm. Weakly expressed during embryogenesis. Down-regulated between 14.5 dpc and 17.5 dpc.

It localises to the mitochondrion. Its subcellular location is the cytoplasm. The protein localises to the nucleus. The enzyme catalyses a hydroperoxy polyunsaturated fatty acid + 2 glutathione = a hydroxy polyunsaturated fatty acid + glutathione disulfide + H2O. It catalyses the reaction 2 glutathione + H2O2 = glutathione disulfide + 2 H2O. The catalysed reaction is tert-butyl hydroperoxide + 2 glutathione = tert-butanol + glutathione disulfide + H2O. It carries out the reaction cumene hydroperoxide + 2 glutathione = 2-phenylpropan-2-ol + glutathione disulfide + H2O. The enzyme catalyses (9S)-hydroperoxy-(10E,12Z)-octadecadienoate + 2 glutathione = (9S)-hydroxy-(10E,12Z)-octadecadienoate + glutathione disulfide + H2O. It catalyses the reaction (13S)-hydroperoxy-(9Z,11E)-octadecadienoate + 2 glutathione = (13S)-hydroxy-(9Z,11E)-octadecadienoate + glutathione disulfide + H2O. The catalysed reaction is (5S)-hydroperoxy-(6E,8Z,11Z,14Z)-eicosatetraenoate + 2 glutathione = (5S)-hydroxy-(6E,8Z,11Z,14Z)-eicosatetraenoate + glutathione disulfide + H2O. It carries out the reaction (12R)-hydroperoxy-(5Z,8Z,10E,14Z)-eicosatetraenoate + 2 glutathione = (12R)-hydroxy-(5Z,8Z,10E,14Z)-eicosatetraenoate + glutathione disulfide + H2O. The enzyme catalyses (12S)-hydroperoxy-(5Z,8Z,10E,14Z)-eicosatetraenoate + 2 glutathione = (12S)-hydroxy-(5Z,8Z,10E,14Z)-eicosatetraenoate + glutathione disulfide + H2O. It catalyses the reaction (15S)-hydroperoxy-(5Z,8Z,11Z,13E)-eicosatetraenoate + 2 glutathione = (15S)-hydroxy-(5Z,8Z,11Z,13E)-eicosatetraenoate + glutathione disulfide + H2O. The catalysed reaction is (5S)-hydroperoxy-(6E,8Z,11Z,14Z,17Z)-eicosapentaenoate + 2 glutathione = (5S)-hydroxy-(6E,8Z,11Z,14Z,17Z)-eicosapentaenoate + glutathione disulfide + H2O. It carries out the reaction (12S)-hydroperoxy-(5Z,8Z,10E,14Z,17Z)-eicosapentaenoate + 2 glutathione = (12S)-hydroxy-(5Z,8Z,10E,14Z,17Z)-eicosapentaenoate + glutathione disulfide + H2O. The enzyme catalyses (15S)-hydroperoxy-(5Z,8Z,11Z,13E,17Z)-eicosapentaenoate + 2 glutathione = (15S)-hydroxy-(5Z,8Z,11Z,13E,17Z)-eicosapentaenoate + glutathione disulfide + H2O. It catalyses the reaction (15S)-hydroperoxy-(11Z,13E)-eicosadienoate + 2 glutathione = (15S)-hydroxy-(11Z,13E)-eicosadienoate + glutathione disulfide + H2O. The catalysed reaction is (17S)-hydroperoxy-(4Z,7Z,10Z,13Z,15E,19Z)-docosahexaenoate + 2 glutathione = (17S)-hydroxy-(4Z,7Z,10Z,13Z,15E,19Z)-docosahexaenoate + glutathione disulfide + H2O. It carries out the reaction a hydroperoxy-1,2-diacyl-glycero-3-phosphocholine + 2 glutathione = a hydroxy-1,2-diacyl-glycero-3-phosphocholine + glutathione disulfide + H2O. Functionally, essential antioxidant peroxidase that directly reduces phospholipid hydroperoxide even if they are incorporated in membranes and lipoproteins. Can also reduce fatty acid hydroperoxide, cholesterol hydroperoxide and thymine hydroperoxide. Plays a key role in protecting cells from oxidative damage by preventing membrane lipid peroxidation. Required to prevent cells from ferroptosis, a non-apoptotic cell death resulting from an iron-dependent accumulation of lipid reactive oxygen species. The presence of selenocysteine (Sec) versus Cys at the active site is essential for life: it provides resistance to overoxidation and prevents cells against ferroptosis. The presence of Sec at the active site is also essential for the survival of a specific type of parvalbumin-positive interneurons, thereby preventing against fatal epileptic seizures. May be required to protect cells from the toxicity of ingested lipid hydroperoxides. Required for normal sperm development and male fertility. Essential for maturation and survival of photoreceptor cells. Plays a role in a primary T-cell response to viral and parasitic infection by protecting T-cells from ferroptosis and by supporting T-cell expansion. Plays a role of glutathione peroxidase in platelets in the arachidonic acid metabolism. Reduces hydroperoxy ester lipids formed by a 15-lipoxygenase that may play a role as down-regulator of the cellular 15-lipoxygenase pathway. Can also reduce small soluble hydroperoxides such as H2O2 and tert-butyl hydroperoxide. Specifically able to suppress the production of leukotriene and prostaglandin in response to several stimuli by reducing fatty acid hydroperoxide. In terms of biological role, specifically required to prevent mitochondrial cell death by mediating reduction of cardiolipin hydroperoxide. Also required for normal sperm development and male fertility. Its function is as follows. Required for male fertility by stabilizing the condensed chromatin in sperm nuclei. This Mus musculus (Mouse) protein is Phospholipid hydroperoxide glutathione peroxidase GPX4.